A 281-amino-acid chain; its full sequence is Gas vesicle protein L1 (281 aa).

The protein belongs to the gas vesicle GvpF/GvpL family. May form oligomers. GvpF to GvpM interact with each other in vitro, and may form multi-subunit complex(es). Interacts with GvpC1, GvpN1 and GvpO1.

It localises to the gas vesicle. Its subcellular location is the cytoplasm. Its function is as follows. Proteins GvpF to GvpM might be involved in nucleating gas vesicle formation. A minor component of the gas vesicle. This the only minor gas vesicle protein that binds all the others (including GvpC1, GvpN1 and GvpO1, but not GvpA1), suggesting it might be able to assemble them. Gas vesicles are hollow, gas filled proteinaceous nanostructures found in several microbial planktonic microorganisms. They allow positioning of halobacteria at the optimal depth for growth in the poorly aerated, shallow brine pools of their habitat. Functionally, expression of a 9.5 kb p-vac DNA fragment containing 2 divergently transcribed regions (gvpD-gvpE-gvpF-gvpG-gvpH-gvpI-gvpJ-gvpK-gvpL-gvpM and gvpA-gvpC-gvpN-gvpO) allows H.volcanii to produce gas vesicles. A minimal gas vesicle can be made in H.volcanii by gvpA1-gvpO1 plus gvpF1-gvpG1-gvpJ1-gvpK1-gvpL1-gvpM1; lack of enough GvpJ1 prevents their formation. A similar region restores gas vesicle production in H.halobium without the p-vac locus, but it still has the c-vac locus. This Halobacterium salinarum (strain ATCC 700922 / JCM 11081 / NRC-1) (Halobacterium halobium) protein is Gas vesicle protein L1 (gvpL11).